Here is a 197-residue protein sequence, read N- to C-terminus: LexA repressor (197 aa).

Residues 28 to 47 (VREIARRFRITPRGAQLHLV) constitute a DNA-binding region (H-T-H motif). Active-site for autocatalytic cleavage activity residues include Ser119 and Lys156.

This sequence belongs to the peptidase S24 family. As to quaternary structure, homodimer.

It catalyses the reaction Hydrolysis of Ala-|-Gly bond in repressor LexA.. Represses a number of genes involved in the response to DNA damage (SOS response), including recA and lexA. In the presence of single-stranded DNA, RecA interacts with LexA causing an autocatalytic cleavage which disrupts the DNA-binding part of LexA, leading to derepression of the SOS regulon and eventually DNA repair. This chain is LexA repressor, found in Thermotoga neapolitana.